The primary structure comprises 958 residues: Glycine dehydrogenase (decarboxylating) (958 aa).

Residue Lys705 is modified to N6-(pyridoxal phosphate)lysine.

The protein belongs to the GcvP family. The glycine cleavage system is composed of four proteins: P, T, L and H. It depends on pyridoxal 5'-phosphate as a cofactor.

The catalysed reaction is N(6)-[(R)-lipoyl]-L-lysyl-[glycine-cleavage complex H protein] + glycine + H(+) = N(6)-[(R)-S(8)-aminomethyldihydrolipoyl]-L-lysyl-[glycine-cleavage complex H protein] + CO2. Functionally, the glycine cleavage system catalyzes the degradation of glycine. The P protein binds the alpha-amino group of glycine through its pyridoxal phosphate cofactor; CO(2) is released and the remaining methylamine moiety is then transferred to the lipoamide cofactor of the H protein. This chain is Glycine dehydrogenase (decarboxylating), found in Bdellovibrio bacteriovorus (strain ATCC 15356 / DSM 50701 / NCIMB 9529 / HD100).